Reading from the N-terminus, the 568-residue chain is Putative ABC transporter ATP-binding protein CPE1583 (568 aa).

ABC transporter domains are found at residues 7-248 (IEFK…GIRE) and 303-536 (LEFK…ASLK). ATP-binding positions include 41–48 (GPSGSGKS) and 336–343 (GKNGAGKS).

The protein belongs to the ABC transporter superfamily.

It localises to the cell membrane. In terms of biological role, probably part of an ABC transporter complex. Responsible for energy coupling to the transport system. The sequence is that of Putative ABC transporter ATP-binding protein CPE1583 from Clostridium perfringens (strain 13 / Type A).